A 319-amino-acid chain; its full sequence is Olfactory receptor 5B21 (319 aa).

At 1–26 (MTSMENITEVTEFILLGLTDDPNLQV) the chain is on the extracellular side. N6 carries an N-linked (GlcNAc...) asparagine glycan. The helical transmembrane segment at 27 to 47 (PLLLIFLFIYLVTLIGNGGMM) threads the bilayer. At 48 to 55 (VIIFSDSH) the chain is on the cytoplasmic side. The chain crosses the membrane as a helical span at residues 56–76 (LHTPMYFFLSNLSFVDLGYSS). Residues 77-100 (AVAPKMVAALQSGNKVISYNGCAA) lie on the Extracellular side of the membrane. A disulfide bridge connects residues C98 and C190. Residues 101-121 (QFFFFVGFATVECYLLASMAY) form a helical membrane-spanning segment. Residues 122 to 134 (DRHAAVCRPLHYT) lie on the Cytoplasmic side of the membrane. Residues 135-155 (TTMTTGVCTILTIGSYTCGFL) form a helical membrane-spanning segment. Residues 156–197 (NASIHAADTFKLSFCGSNKINHFFCDIPPLLALACSSTHISK) lie on the Extracellular side of the membrane. Residues 198 to 218 (LVVFFVVGFNVFFTLLVIIIS) form a helical membrane-spanning segment. Residues 219-238 (YFFIYIAIQNMKSSEGRKKA) are Cytoplasmic-facing. Residues 239 to 259 (FSTCASHLTAVSIFYGTIIFM) form a helical membrane-spanning segment. At 260–272 (YLQPSSGQSMDTD) the chain is on the extracellular side. Residues 273 to 293 (KIASVFYTVVIPMLNPLIYSL) form a helical membrane-spanning segment. Residues 294 to 319 (RNREVKSALWKILNRFYPASFSVSRK) are Cytoplasmic-facing.

It belongs to the G-protein coupled receptor 1 family.

Its subcellular location is the cell membrane. In terms of biological role, odorant receptor. In Mus musculus (Mouse), this protein is Olfactory receptor 5B21.